A 204-amino-acid polypeptide reads, in one-letter code: HTH-type transcriptional activator BcrR (204 aa).

Over 1–81 the chain is Cytoplasmic; that stretch reads MEFNEKLQQL…ETENRSNLKK (81 aa). The region spanning 7–61 is the HTH cro/C1-type domain; the sequence is LQQLRTGKNLTQEQLAEQLYVSRTAISKWESGKGYPNMESLKCISKFFSVTIDEL. The segment at residues 18 to 37 is a DNA-binding region (H-T-H motif); it reads QEQLAEQLYVSRTAISKWES. The chain crosses the membrane as a helical span at residues 82-102; sequence IYNYIYGILDMMAVAFIFLPL. The Extracellular segment spans residues 103-126; it reads YGNSVGGYVYAVNLLSFTATTPFN. A helical membrane pass occupies residues 127–147; sequence LAVYWSAFAALIIIGIGKIIS. At 148–154 the chain is on the cytoplasmic side; it reads THLDKEK. Residues 155-175 traverse the membrane as a helical segment; that stretch reads WGGIATKCSLTITALAVCFFA. Residues 176–181 are Extracellular-facing; it reads AAREPY. A helical transmembrane segment spans residues 182–202; it reads ITVLVFLLLIGKIFVWIKQMG. Residues 203–204 lie on the Cytoplasmic side of the membrane; sequence MK.

It localises to the cell membrane. With respect to regulation, constitutively bound to the bcrABD promoter. Requires bacitracin for activation, probably through a conformational change, such as the oligomerization of inactive dimers to form active tetramers. Functions both as a membrane-bound sensor and a transducer of bacitracin availability to activate transcription of the bcrABD operon in the presence of bacitracin. Binds specifically to two inverted repeat sequences on the bcrABD promoter, irrespective of bacitracin concentration. This chain is HTH-type transcriptional activator BcrR, found in Enterococcus faecalis (Streptococcus faecalis).